Here is a 257-residue protein sequence, read N- to C-terminus: Uxu operon transcriptional regulator (257 aa).

Residues 8-76 enclose the HTH gntR-type domain; the sequence is QRPYQEVGAM…RGAGIYVLDN (69 aa). The segment at residues 36–55 is a DNA-binding region (H-T-H motif); it reads EREIAEMLDVTRTVVREALI.

In terms of biological role, repressor for the uxuRBA operon. The chain is Uxu operon transcriptional regulator (uxuR) from Escherichia coli (strain K12).